An 861-amino-acid chain; its full sequence is DNA mismatch repair protein MutS (861 aa).

Position 609 to 616 (609 to 616 (GPNMAGKS)) interacts with ATP.

Belongs to the DNA mismatch repair MutS family.

This protein is involved in the repair of mismatches in DNA. It is possible that it carries out the mismatch recognition step. This protein has a weak ATPase activity. This is DNA mismatch repair protein MutS from Borrelia hermsii (strain HS1 / DAH).